Consider the following 721-residue polypeptide: Polyphosphate kinase (721 aa).

Asparagine 54 provides a ligand contact to ATP. Mg(2+) is bound by residues arginine 379 and arginine 409. The 35-residue stretch at 434 to 468 folds into the PLD phosphodiesterase domain; it reads THLKTHSKIALVVKRIGGELTSFVHLGTGNYNDKT. The active-site Phosphohistidine intermediate is histidine 439. Tyrosine 472, arginine 568, and histidine 596 together coordinate ATP.

It belongs to the polyphosphate kinase 1 (PPK1) family. It depends on Mg(2+) as a cofactor. In terms of processing, an intermediate of this reaction is the autophosphorylated ppk in which a phosphate is covalently linked to a histidine residue through a N-P bond.

The catalysed reaction is [phosphate](n) + ATP = [phosphate](n+1) + ADP. In terms of biological role, catalyzes the reversible transfer of the terminal phosphate of ATP to form a long-chain polyphosphate (polyP). The sequence is that of Polyphosphate kinase from Staphylococcus haemolyticus (strain JCSC1435).